A 148-amino-acid polypeptide reads, in one-letter code: Caltractin (148 aa).

EF-hand domains follow at residues 4 to 39 (EQKQ…LGFE), 40 to 75 (PKKE…KMGE), 77 to 112 (DSRE…LGEN), and 113 to 148 (LTDE…TSLF). Ca(2+)-binding residues include D17, D19, S21, T23, E28, D53, D55, S57, T59, and E64. D126, D128, D130, E132, and E137 together coordinate Ca(2+).

It belongs to the centrin family. Ubiquitous.

In terms of biological role, this calcium-binding protein is found in the basal body complexes (the functional homolog of the centrosome in animal cell). In mitotic cells it is specifically associated with the poles of the mitotic spindles at the sites of the duplicated basal body complexes. This Spermatozopsis similis (Green alga) protein is Caltractin.